Consider the following 396-residue polypeptide: Ribosomal RNA large subunit methyltransferase I (396 aa).

The PUA domain occupies Ala2–Phe79.

This sequence belongs to the methyltransferase superfamily. RlmI family.

The protein resides in the cytoplasm. It carries out the reaction cytidine(1962) in 23S rRNA + S-adenosyl-L-methionine = 5-methylcytidine(1962) in 23S rRNA + S-adenosyl-L-homocysteine + H(+). Its function is as follows. Specifically methylates the cytosine at position 1962 (m5C1962) of 23S rRNA. In Shewanella baltica (strain OS155 / ATCC BAA-1091), this protein is Ribosomal RNA large subunit methyltransferase I.